The sequence spans 130 residues: Encapsulin nanocompartment cargo protein EncC (130 aa).

Fe cation is bound by residues Glu31, Glu61, and His64. The Di-iron-binding motif signature appears at 61–64 (EREH). The disordered stretch occupies residues 103–130 (EAVGKEGAAPSPADVTPEKRLTVGSLRR). A probable targeting peptide region spans residues 123–130 (LTVGSLRR).

This sequence belongs to the ferritin-like superfamily.

The protein resides in the encapsulin nanocompartment. Cargo protein of a type 1 encapsulin nanocompartment. May help nucleate Fe atoms in the interior of the encapsulin nanocompartment. Present in about 92 copies/encapsulin nanocompartment. In Myxococcus xanthus (strain DK1622), this protein is Encapsulin nanocompartment cargo protein EncC.